The following is a 208-amino-acid chain: Single-stranded DNA-binding protein DdrA (208 aa).

The protein belongs to the RAD52 family. As to quaternary structure, homooligomer composed of 8 to 10 subunits; probably arranged in a ring-structure.

Its function is as follows. ssDNA-binding protein that contributes to the ionizing radiation resistance of D.radiodurans. Plays a role in DNA repair and genome reconstitution, in a RecA-independent process, since DdrA is essential for recovery from severe genomic fragmentation as a result of exposure to severe levels of ionizing radiation in an environment lacking nutrients. In vitro, binds to the 3'-ends of single-stranded DNA, protecting them from nuclease degradation. Thus, DdrA is part of a DNA end-protection system that helps to preserve genome integrity following irradiation or desiccation. Does not display DNA strand annealing activity, unlike eukaryotic Rad52 protein homologs. The polypeptide is Single-stranded DNA-binding protein DdrA (ddrA) (Deinococcus radiodurans (strain ATCC 13939 / DSM 20539 / JCM 16871 / CCUG 27074 / LMG 4051 / NBRC 15346 / NCIMB 9279 / VKM B-1422 / R1)).